The following is a 118-amino-acid chain: Large ribosomal subunit protein uL22 (118 aa).

The protein belongs to the universal ribosomal protein uL22 family. In terms of assembly, part of the 50S ribosomal subunit.

Its function is as follows. This protein binds specifically to 23S rRNA; its binding is stimulated by other ribosomal proteins, e.g. L4, L17, and L20. It is important during the early stages of 50S assembly. It makes multiple contacts with different domains of the 23S rRNA in the assembled 50S subunit and ribosome. The globular domain of the protein is located near the polypeptide exit tunnel on the outside of the subunit, while an extended beta-hairpin is found that lines the wall of the exit tunnel in the center of the 70S ribosome. The protein is Large ribosomal subunit protein uL22 of Leuconostoc citreum (strain KM20).